Consider the following 54-residue polypeptide: uncharacterized protein (54 aa).

This is an uncharacterized protein from Saccharolobus solfataricus (Sulfolobus solfataricus).